The sequence spans 288 residues: MFEPVPDLNLEASVELGEVNIDQTTPMIKENIGFISRSRRLFAHRSKDDERKLALRFFLQRLYFLDHREIHYLFRCVDAVKDVTITKKNNIIVAPYIALLTIASKGCKLTETMIEAFFPELYNEHSKKFKFNSQVSIIQEKLGYQSGNYHVYDFEPYYSTVALAIRDEHSSGIFNIRQESYLVSSLSEITYRFYLINLKSDLVQWSASTGAVINQMVNTVLITVYEKLQLVIENDSQFICSLAVESELPIKLLKDRNELFTKFINELKKTSSFKISKRDKDTLLKYFT.

Belongs to the orthopoxvirus OPG134 family. Heterodimer of a 45 kDa (A23R) and a 32 kDa (A8R) subunit to form the virus intermediate transcription factor (VITF)-3.

Its function is as follows. Acts with RNA polymerase to initiate transcription from intermediate gene promoters. The protein is Intermediate transcription factor 3 small subunit (OPG134) of Homo sapiens (Human).